Consider the following 368-residue polypeptide: 3-isopropylmalate dehydrogenase (368 aa).

NAD(+) is bound at residue 80–93 (GPKWDNLEFSKKPE). Substrate contacts are provided by Arg-100, Arg-110, Arg-138, and Asp-229. The Mg(2+) site is built by Asp-229, Asp-253, and Asp-257. Residue 292–304 (GSAPDIAGKEIAN) participates in NAD(+) binding.

Belongs to the isocitrate and isopropylmalate dehydrogenases family. LeuB type 1 subfamily. Homodimer. It depends on Mg(2+) as a cofactor. Requires Mn(2+) as cofactor.

The protein localises to the cytoplasm. It carries out the reaction (2R,3S)-3-isopropylmalate + NAD(+) = 4-methyl-2-oxopentanoate + CO2 + NADH. It participates in amino-acid biosynthesis; L-leucine biosynthesis; L-leucine from 3-methyl-2-oxobutanoate: step 3/4. Its function is as follows. Catalyzes the oxidation of 3-carboxy-2-hydroxy-4-methylpentanoate (3-isopropylmalate) to 3-carboxy-4-methyl-2-oxopentanoate. The product decarboxylates to 4-methyl-2 oxopentanoate. This is 3-isopropylmalate dehydrogenase from Pelagibacter ubique (strain HTCC1062).